The chain runs to 609 residues: Glutamine--fructose-6-phosphate aminotransferase [isomerizing] (609 aa).

Residue cysteine 2 is the Nucleophile; for GATase activity of the active site. The Glutamine amidotransferase type-2 domain occupies 2–218 (CGIVGAIAQR…EGDIAEITRR (217 aa)). SIS domains follow at residues 286 to 426 (ADEL…LKGL) and 458 to 599 (LAED…VDQP). Lysine 604 (for Fru-6P isomerization activity) is an active-site residue.

In terms of assembly, homodimer.

The protein localises to the cytoplasm. It carries out the reaction D-fructose 6-phosphate + L-glutamine = D-glucosamine 6-phosphate + L-glutamate. Its function is as follows. Catalyzes the first step in hexosamine metabolism, converting fructose-6P into glucosamine-6P using glutamine as a nitrogen source. The polypeptide is Glutamine--fructose-6-phosphate aminotransferase [isomerizing] (Shigella flexneri).